A 408-amino-acid polypeptide reads, in one-letter code: Acetate kinase (408 aa).

N7 is a Mg(2+) binding site. Position 14 (K14) interacts with ATP. R98 serves as a coordination point for substrate. D155 serves as the catalytic Proton donor/acceptor. ATP-binding positions include 214-218, 289-291, and 337-341; these read HLGNG, DLR, and GVGEN. A Mg(2+)-binding site is contributed by E390.

Belongs to the acetokinase family. In terms of assembly, homodimer. It depends on Mg(2+) as a cofactor. Mn(2+) serves as cofactor.

The protein localises to the cytoplasm. The catalysed reaction is acetate + ATP = acetyl phosphate + ADP. It functions in the pathway metabolic intermediate biosynthesis; acetyl-CoA biosynthesis; acetyl-CoA from acetate: step 1/2. Catalyzes the formation of acetyl phosphate from acetate and ATP. Can also catalyze the reverse reaction. In Cyanothece sp. (strain PCC 7425 / ATCC 29141), this protein is Acetate kinase.